Reading from the N-terminus, the 85-residue chain is uncharacterized protein (85 aa).

Helical transmembrane passes span 4 to 24 (LTLC…LGGA), 27 to 47 (SPWL…LIGE), and 61 to 81 (RLLL…LYLA).

The protein resides in the cell membrane. This is an uncharacterized protein from Pseudomonas aeruginosa (strain ATCC 15692 / DSM 22644 / CIP 104116 / JCM 14847 / LMG 12228 / 1C / PRS 101 / PAO1).